Consider the following 381-residue polypeptide: GDP-mannose-dependent monoacylated alpha-(1-6)-phosphatidylinositol monomannoside mannosyltransferase (381 aa).

The GDP-alpha-D-mannose site is built by Arg-206, Lys-211, Leu-261, and Glu-298.

Belongs to the glycosyltransferase group 1 family. Glycosyltransferase 4 subfamily.

The catalysed reaction is a 1,2-diacyl-sn-glycero-3-phospho-[alpha-D-mannopyranosyl-(1&lt;-&gt;6)-D-myo-inositol] + GDP-alpha-D-mannose = a 2,6-O-bis(alpha-D-mannopyranosyl)-1-phosphatidyl-1D-myo-inositol + GDP + H(+). It catalyses the reaction a 1,2-diacyl-sn-glycero-3-phospho-[alpha-D-6-acyl-mannopyranosyl-(1&lt;-&gt;6)-D-myo-inositol] + GDP-alpha-D-mannose = a 2-O-(alpha-D-mannosyl)-6-O-(6-O-acyl-alpha-D-mannosyl)-1-phosphatidyl-1D-myo-inositol + GDP + H(+). It participates in phospholipid metabolism; phosphatidylinositol metabolism. Its function is as follows. Involved in the biosynthesis of phosphatidyl-myo-inositol mannosides (PIM) which are early precursors in the biosynthesis of lipomannans (LM) and lipoarabinomannans (LAM). Catalyzes the addition of a mannosyl residue from GDP-D-mannose (GDP-Man) to the position 6 of a phosphatidyl-myo-inositol bearing an alpha-1,2-linked mannose residue (PIM1) to generate phosphatidyl-myo-inositol bearing alpha-1,2- and alpha-1,6-linked mannose residues (Ac1PIM2). PimB also catalyzes the addition of a mannosyl residue from GDP-Man to the position 6 of phosphatidyl-myo-inositol bearing an acylated alpha-1,2-linked mannose residue (Ac1PIM1) to generate monoacylated phosphatidyl-myo-inositol bearing alpha-1,2- and alpha-1,6-linked mannose residues (Ac1PIM2). The addition of the second mannosyl residue by PimB preferentially occurs before the acylation of the mannosyl residue transferred by PimA. Also able to transfer a mannosyl residue from GDP-Man to the position 6 of a phosphatidyl-myo-inositol (PI), but this reaction is very slow. The protein is GDP-mannose-dependent monoacylated alpha-(1-6)-phosphatidylinositol monomannoside mannosyltransferase of Corynebacterium glutamicum (strain ATCC 13032 / DSM 20300 / JCM 1318 / BCRC 11384 / CCUG 27702 / LMG 3730 / NBRC 12168 / NCIMB 10025 / NRRL B-2784 / 534).